A 296-amino-acid chain; its full sequence is MTNELPEIGSPARTKAILNRYRLVAKKSLGQNFLSDLNILRNIVAAGDVNDHDNVIEIGPGIGALTEQIAKRAHKVVAFEIDENLLPVLDETLMDYKNVKIINEDILKANLPAVVADEFEADRPLKLVANLPYYITTPILMGVLQSTVRFEAIVVMMQAEVAERLVAEPGTKAYGSLSVIMQYRAHVEIAFNVPRTAFIPQPNVDSAIIRLTPREALPVNPYEDKALFSFVKGCFAHRRKSLWNNLQGIFGKQPEVRERIETVLNQTGISRQLRPERLTLLNFIELTNAFHNEGLM.

S-adenosyl-L-methionine contacts are provided by N32, L34, G59, E80, D105, and N130.

Belongs to the class I-like SAM-binding methyltransferase superfamily. rRNA adenine N(6)-methyltransferase family. RsmA subfamily.

It is found in the cytoplasm. It carries out the reaction adenosine(1518)/adenosine(1519) in 16S rRNA + 4 S-adenosyl-L-methionine = N(6)-dimethyladenosine(1518)/N(6)-dimethyladenosine(1519) in 16S rRNA + 4 S-adenosyl-L-homocysteine + 4 H(+). In terms of biological role, specifically dimethylates two adjacent adenosines (A1518 and A1519) in the loop of a conserved hairpin near the 3'-end of 16S rRNA in the 30S particle. May play a critical role in biogenesis of 30S subunits. This chain is Ribosomal RNA small subunit methyltransferase A, found in Levilactobacillus brevis (strain ATCC 367 / BCRC 12310 / CIP 105137 / JCM 1170 / LMG 11437 / NCIMB 947 / NCTC 947) (Lactobacillus brevis).